Consider the following 736-residue polypeptide: MAWYWWRRRRRRGWWKPRRRRWRRRRARRRGPARRHRARRRVRRRRGRWRRRYRRWRRRGGRRRHRKKLIIKQWQPNFIRHCYIIGYMPLIICGENTFSHNYATHSDDMLSTGPYGGGMTTTKFTLRILFDEYQRHLNFWTVSNQDLDLARYLGTKIIFFRHPTVDFVVQIHTQPPFQDTEITAPSIHPGMLILSKKHILIPSLKTRPSKKHYVKVRVGAPRLFQDKWYPQSELCDVTLLVIYATACDLQYPFGSPQTDNVCVNFQILGQPYYQHLKTALGLTEKTTYENHYKNNLYKKIKFYNTTETIAQLKPLVDATTNQTWSHYVNPNKLTTTPTSEITHNNTWYRGNAYNDKITDLPEIVKKSYYKATELAIPEAVKPTTDLFEYHAGIYSSIFLSPGRAYFETPGAYQDIIYNPFTDKGIGNIVWIDWLSKSDAVYSEKQSKCGIFDLPLWAAFFGYAEFCSKSTGDTAIAYNSRVCVRCPYTEPQLLNHNNPSQGYVFYSYNFGKGKMPGGSSQVPIRMRWKWYVCMFHQLEVMEAICQSGPFAYHSDEKKAVLGIKYKFDWKWGGNPISQQIVRHPCNGQTSSGNRVPRSVQAVDPKYVSLQLVWHSWDFRRGLFGQAGIKRMQQESDALTLSPVHRPKRPKRDTQVKEKTPEKDSDSAVQLRRLQPWIHSSQETKDEEEEIPEGPVQEQLLQQLQQQRLLRVQLESIAQEVLKIRRGHSLHPLLSSHA.

The disordered stretch occupies residues 633–692 (ESDALTLSPVHRPKRPKRDTQVKEKTPEKDSDSAVQLRRLQPWIHSSQETKDEEEEIPEG). The span at 650 to 664 (RDTQVKEKTPEKDSD) shows a compositional bias: basic and acidic residues.

Belongs to the anelloviridae capsid protein family.

It is found in the virion. Self assemble to form an icosahedral capsid. This is Capsid protein from Torque teno virus (isolate Human/Finland/Hel32/2002) (TTV).